A 141-amino-acid chain; its full sequence is 2S seed storage albumin protein (141 aa).

Residues 1-22 (MARLTSIIALFAVALLVADAYA) form the signal peptide. The propeptide occupies 23 to 35 (YRTTITTVEVEEN). Intrachain disulfides connect Cys43-Cys97, Cys55-Cys86, Cys87-Cys132, and Cys99-Cys139.

This sequence belongs to the 2S seed storage albumins family. The mature protein consists of a small and a large chain linked by 2 disulfide bonds.

Its subcellular location is the vacuole. The protein resides in the aleurone grain. In terms of biological role, this is a 2S seed storage protein. The chain is 2S seed storage albumin protein from Cucurbita maxima (Pumpkin).